Reading from the N-terminus, the 254-residue chain is Phosphoglycerate mutase 1 (254 aa).

Residues 10 to 17 (RHGESAWN) and 23 to 24 (SG) each bind substrate. H11 serves as the catalytic Tele-phosphohistidine intermediate. Phosphoserine occurs at positions 14 and 23. Y26 bears the Phosphotyrosine mark. S31 is modified (phosphoserine). Residues R62, 89–92 (ERHY), and K100 each bind substrate. E89 functions as the Proton donor/acceptor in the catalytic mechanism. The residue at position 106 (K106) is an N6-acetyllysine. 116–117 (RR) is a binding site for substrate. A Phosphoserine modification is found at S118. 187 to 188 (GN) contributes to the substrate binding site. K251 bears the N6-acetyllysine; alternate mark. K251 carries the N6-succinyllysine; alternate modification. N6-acetyllysine occurs at positions 253 and 254.

This sequence belongs to the phosphoglycerate mutase family. BPG-dependent PGAM subfamily. In terms of assembly, homodimer. In terms of processing, acetylated at Lys-253, Lys-253 and Lys-254 under high glucose condition. Acetylation increases catalytic activity. Under glucose restriction SIRT1 levels dramatically increase and it deacetylates the enzyme.

The enzyme catalyses (2R)-2-phosphoglycerate = (2R)-3-phosphoglycerate. It catalyses the reaction (2R)-3-phospho-glyceroyl phosphate = (2R)-2,3-bisphosphoglycerate + H(+). Functionally, catalyzes the interconversion of 2-phosphoglycerate and 3-phosphoglyceratea crucial step in glycolysis, by using 2,3-bisphosphoglycerate. Also catalyzes the interconversion of (2R)-2,3-bisphosphoglycerate and (2R)-3-phospho-glyceroyl phosphate. The protein is Phosphoglycerate mutase 1 of Mus musculus (Mouse).